Here is a 412-residue protein sequence, read N- to C-terminus: Tryptophan synthase beta chain (412 aa).

The residue at position 92 (Lys-92) is an N6-(pyridoxal phosphate)lysine.

Belongs to the TrpB family. As to quaternary structure, tetramer of two alpha and two beta chains. Pyridoxal 5'-phosphate serves as cofactor.

The enzyme catalyses (1S,2R)-1-C-(indol-3-yl)glycerol 3-phosphate + L-serine = D-glyceraldehyde 3-phosphate + L-tryptophan + H2O. Its pathway is amino-acid biosynthesis; L-tryptophan biosynthesis; L-tryptophan from chorismate: step 5/5. Functionally, the beta subunit is responsible for the synthesis of L-tryptophan from indole and L-serine. The polypeptide is Tryptophan synthase beta chain (Methylibium petroleiphilum (strain ATCC BAA-1232 / LMG 22953 / PM1)).